The primary structure comprises 159 residues: Phosphopantetheine adenylyltransferase (159 aa).

A substrate-binding site is contributed by threonine 9. Residues 9 to 10 and histidine 17 contribute to the ATP site; that span reads TF. Substrate is bound by residues lysine 41, leucine 73, and arginine 87. ATP is bound by residues 88 to 90, glutamate 98, and 123 to 129; these read GLR and YSFISST.

It belongs to the bacterial CoaD family. Homohexamer. It depends on Mg(2+) as a cofactor.

The protein localises to the cytoplasm. It carries out the reaction (R)-4'-phosphopantetheine + ATP + H(+) = 3'-dephospho-CoA + diphosphate. It participates in cofactor biosynthesis; coenzyme A biosynthesis; CoA from (R)-pantothenate: step 4/5. Functionally, reversibly transfers an adenylyl group from ATP to 4'-phosphopantetheine, yielding dephospho-CoA (dPCoA) and pyrophosphate. The sequence is that of Phosphopantetheine adenylyltransferase from Pseudomonas syringae pv. syringae (strain B728a).